Consider the following 299-residue polypeptide: Oxygen-dependent coproporphyrinogen-III oxidase (299 aa).

Serine 92 contributes to the substrate binding site. 2 residues coordinate a divalent metal cation: histidine 96 and histidine 106. Histidine 106 serves as the catalytic Proton donor. Asparagine 108 to arginine 110 is a substrate binding site. The a divalent metal cation site is built by histidine 145 and histidine 175. The tract at residues tyrosine 240–glutamate 275 is important for dimerization. Glycine 258 to arginine 260 contacts substrate.

The protein belongs to the aerobic coproporphyrinogen-III oxidase family. Homodimer. A divalent metal cation is required as a cofactor.

It is found in the cytoplasm. It catalyses the reaction coproporphyrinogen III + O2 + 2 H(+) = protoporphyrinogen IX + 2 CO2 + 2 H2O. The protein operates within porphyrin-containing compound metabolism; protoporphyrin-IX biosynthesis; protoporphyrinogen-IX from coproporphyrinogen-III (O2 route): step 1/1. Functionally, involved in the heme biosynthesis. Catalyzes the aerobic oxidative decarboxylation of propionate groups of rings A and B of coproporphyrinogen-III to yield the vinyl groups in protoporphyrinogen-IX. This is Oxygen-dependent coproporphyrinogen-III oxidase from Klebsiella pneumoniae (strain 342).